The sequence spans 29 residues: Cytochrome b6-f complex subunit 8 (29 aa).

Residues 3–23 (IVSLAWAGLMVVFTFSLSLVV) form a helical membrane-spanning segment.

Belongs to the PetN family. The 4 large subunits of the cytochrome b6-f complex are cytochrome b6, subunit IV (17 kDa polypeptide, PetD), cytochrome f and the Rieske protein, while the 4 small subunits are PetG, PetL, PetM and PetN. The complex functions as a dimer.

Its subcellular location is the plastid. It localises to the chloroplast thylakoid membrane. Its function is as follows. Component of the cytochrome b6-f complex, which mediates electron transfer between photosystem II (PSII) and photosystem I (PSI), cyclic electron flow around PSI, and state transitions. The protein is Cytochrome b6-f complex subunit 8 of Arabis hirsuta (Hairy rock-cress).